A 217-amino-acid chain; its full sequence is Adenylate kinase (217 aa).

10 to 15 (GAGKGT) contributes to the ATP binding site. Positions 30 to 59 (STGDMLRAAVKAGTPLGVEAKKVMDAGGLV) are NMP. AMP contacts are provided by residues threonine 31, arginine 36, 57 to 59 (GLV), 85 to 88 (GFPR), and glutamine 92. The tract at residues 122–159 (GRRAHLASGRTYHVKYNPPKVAGKDDLTGEDLVQRDDD) is LID. Residues arginine 123 and 132–133 (TY) contribute to the ATP site. Residues arginine 156 and arginine 167 each contribute to the AMP site. Glycine 203 lines the ATP pocket.

The protein belongs to the adenylate kinase family. Monomer.

It localises to the cytoplasm. The catalysed reaction is AMP + ATP = 2 ADP. Its pathway is purine metabolism; AMP biosynthesis via salvage pathway; AMP from ADP: step 1/1. Its function is as follows. Catalyzes the reversible transfer of the terminal phosphate group between ATP and AMP. Plays an important role in cellular energy homeostasis and in adenine nucleotide metabolism. In Aromatoleum aromaticum (strain DSM 19018 / LMG 30748 / EbN1) (Azoarcus sp. (strain EbN1)), this protein is Adenylate kinase.